Reading from the N-terminus, the 171-residue chain is Probable deoxyuridine 5'-triphosphate nucleotidohydrolase (171 aa).

This sequence belongs to the dCTP deaminase family. Archaeal dUTPase subfamily.

It catalyses the reaction dUTP + H2O = dUMP + diphosphate + H(+). It functions in the pathway pyrimidine metabolism; dUMP biosynthesis; dUMP from dCTP (dUTP route): step 2/2. In terms of biological role, this enzyme is involved in nucleotide metabolism: it produces dUMP, the immediate precursor of thymidine nucleotides and it decreases the intracellular concentration of dUTP so that uracil cannot be incorporated into DNA. The chain is Probable deoxyuridine 5'-triphosphate nucleotidohydrolase from Methanosarcina barkeri (strain Fusaro / DSM 804).